Reading from the N-terminus, the 369-residue chain is MRIEAAELRILELPLKFRFETSFGVQTKRTILLLRLFGEGLEGLGEGVMERLPLYREETVAGARYLLEEVFLPRVLGRDLPNPEALREALAPFRGNPMAKAVLEMAFFDLWAKALGRPLWQVLGGVRQAVEVGVSLGIQPSVEDTLRVVERHLEEGYRRIKLKIKPGWDYEVLKAVREAFPEATLTADANSAYSLANLAQLKRLDELRLDYIEQPLAYDDLLDHAKLQRELSTPICLDESLTGAEKARKAIELGAGRVFNVKPARLGGHGESLRVHALAESAGIPLWMGGMLEAGVGRAHNLHLATLPGFTKPGDVSSASRYWEEDIVEEALEAKDGLMPVPEGVGIGVHLKLPFVERVTLWQRYMSAS.

The Proton donor role is filled by Lys-163. Residues Asp-188, Glu-213, and Asp-238 each coordinate Mg(2+). The Proton acceptor role is filled by Lys-262.

Belongs to the mandelate racemase/muconate lactonizing enzyme family. MenC type 2 subfamily. Homooctamer. Tetramer of dimers. Requires a divalent metal cation as cofactor.

It carries out the reaction (1R,6R)-6-hydroxy-2-succinyl-cyclohexa-2,4-diene-1-carboxylate = 2-succinylbenzoate + H2O. Acts as a N-succinylamino acid racemase (NSAR) that catalyzes the racemization of N-succinyl-L-phenylglycine. Also converts 2-succinyl-6-hydroxy-2,4-cyclohexadiene-1-carboxylate (SHCHC) to 2-succinylbenzoate (OSB). Catalyzes both N-succinylamino acid racemization and OSB synthesis at equivalent rates. However, NSAR activity is probably the protein's biological function, because menaquinone biosynthesis genes are missing in this species. This is N-succinylamino acid racemase from Thermus thermophilus (strain ATCC 27634 / DSM 579 / HB8).